Consider the following 186-residue polypeptide: Ribosome-recycling factor (186 aa).

The protein belongs to the RRF family.

It is found in the cytoplasm. In terms of biological role, responsible for the release of ribosomes from messenger RNA at the termination of protein biosynthesis. May increase the efficiency of translation by recycling ribosomes from one round of translation to another. The sequence is that of Ribosome-recycling factor from Bartonella quintana (strain Toulouse) (Rochalimaea quintana).